A 122-amino-acid chain; its full sequence is Ribosome-binding factor A (122 aa).

The segment covering 95–111 (PTVERVTRIQRTLREVS) has biased composition (basic and acidic residues). Residues 95–122 (PTVERVTRIQRTLREVSGEDGDGNGTQE) form a disordered region.

This sequence belongs to the RbfA family. In terms of assembly, monomer. Binds 30S ribosomal subunits, but not 50S ribosomal subunits or 70S ribosomes.

The protein localises to the cytoplasm. Functionally, one of several proteins that assist in the late maturation steps of the functional core of the 30S ribosomal subunit. Associates with free 30S ribosomal subunits (but not with 30S subunits that are part of 70S ribosomes or polysomes). Required for efficient processing of 16S rRNA. May interact with the 5'-terminal helix region of 16S rRNA. This is Ribosome-binding factor A from Rubrobacter xylanophilus (strain DSM 9941 / JCM 11954 / NBRC 16129 / PRD-1).